The sequence spans 452 residues: Phosphoglucosamine mutase (452 aa).

Serine 103 functions as the Phosphoserine intermediate in the catalytic mechanism. Mg(2+)-binding residues include serine 103, aspartate 243, aspartate 245, and aspartate 247. Serine 103 bears the Phosphoserine mark.

The protein belongs to the phosphohexose mutase family. Requires Mg(2+) as cofactor. Post-translationally, activated by phosphorylation.

The catalysed reaction is alpha-D-glucosamine 1-phosphate = D-glucosamine 6-phosphate. Its function is as follows. Catalyzes the conversion of glucosamine-6-phosphate to glucosamine-1-phosphate. This is Phosphoglucosamine mutase from Lactobacillus acidophilus (strain ATCC 700396 / NCK56 / N2 / NCFM).